Consider the following 551-residue polypeptide: ATP synthase subunit alpha (551 aa).

174 to 181 contributes to the ATP binding site; sequence GDRQTGKT.

Belongs to the ATPase alpha/beta chains family. In terms of assembly, F-type ATPases have 2 components, CF(1) - the catalytic core - and CF(0) - the membrane proton channel. CF(1) has five subunits: alpha(3), beta(3), gamma(1), delta(1), epsilon(1). CF(0) has three main subunits: a(1), b(2) and c(9-12). The alpha and beta chains form an alternating ring which encloses part of the gamma chain. CF(1) is attached to CF(0) by a central stalk formed by the gamma and epsilon chains, while a peripheral stalk is formed by the delta and b chains.

The protein localises to the cell inner membrane. It catalyses the reaction ATP + H2O + 4 H(+)(in) = ADP + phosphate + 5 H(+)(out). In terms of biological role, produces ATP from ADP in the presence of a proton gradient across the membrane. The alpha chain is a regulatory subunit. In Salinibacter ruber (strain DSM 13855 / M31), this protein is ATP synthase subunit alpha.